Consider the following 136-residue polypeptide: Large ribosomal subunit protein uL16c (136 aa).

This sequence belongs to the universal ribosomal protein uL16 family. Part of the 50S ribosomal subunit.

It localises to the plastid. The protein resides in the chloroplast. The protein is Large ribosomal subunit protein uL16c of Oryza sativa (Rice).